A 479-amino-acid chain; its full sequence is GTPase Obg (479 aa).

Positions 2 to 159 (PRFVDRVVIH…RDLTLELKTV (158 aa)) constitute an Obg domain. An OBG-type G domain is found at 160–340 (ADVGLVGFPS…LIFGLSQMIS (181 aa)). GTP is bound by residues 166–173 (GFPSAGKS), 191–195 (FTTLV), 212–215 (DVPG), 292–295 (NKID), and 321–323 (STA). Residues S173 and T193 each contribute to the Mg(2+) site. The OCT domain occupies 358–436 (PIPVDDSGFT…IGEMTFDWEP (79 aa)). The segment at 434-479 (WEPQTPAGEPVAMSGRGTDPRLDSNKRVGAAERKAARSRRREHGDG) is disordered. Residues 451–468 (TDPRLDSNKRVGAAERKA) show a composition bias toward basic and acidic residues. The span at 469–479 (ARSRRREHGDG) shows a compositional bias: basic residues.

This sequence belongs to the TRAFAC class OBG-HflX-like GTPase superfamily. OBG GTPase family. In terms of assembly, monomer. Requires Mg(2+) as cofactor.

The protein resides in the cytoplasm. In terms of biological role, an essential GTPase which binds GTP, GDP and possibly (p)ppGpp with moderate affinity, with high nucleotide exchange rates and a fairly low GTP hydrolysis rate. Plays a role in control of the cell cycle, stress response, ribosome biogenesis and in those bacteria that undergo differentiation, in morphogenesis control. The chain is GTPase Obg from Mycobacterium tuberculosis (strain ATCC 25177 / H37Ra).